Here is a 571-residue protein sequence, read N- to C-terminus: Potassium-transporting ATPase potassium-binding subunit (571 aa).

A run of 10 helical transmembrane segments spans residues 7-27 (LQFAALIAVLLLTAPALGGYL), 66-86 (TYALSVLAFSVMSFLLLYGIA), 137-157 (GLAVQNFVSASAGMCVLAALI), 188-208 (FVVAILLVSQGVIQNLHGFIV), 255-275 (IGNFVENWAILIIPFALCFAF), 286-306 (WAVLAIMGIIWIGMSVAAMSF), 390-410 (VGLNGLLVMAILAVFIAGLMV), 430-450 (TLYILAMPIALLSFAAASVLI), 497-517 (IGVAMLIGRFFLIIPVLAIAG), and 538-558 (LFVGLVIGVVLIVGGLTFFPA).

It belongs to the KdpA family. In terms of assembly, the system is composed of three essential subunits: KdpA, KdpB and KdpC.

Its subcellular location is the cell membrane. In terms of biological role, part of the high-affinity ATP-driven potassium transport (or Kdp) system, which catalyzes the hydrolysis of ATP coupled with the electrogenic transport of potassium into the cytoplasm. This subunit binds the extracellular potassium ions and delivers the ions to the membrane domain of KdpB through an intramembrane tunnel. In Mycobacterium bovis (strain ATCC BAA-935 / AF2122/97), this protein is Potassium-transporting ATPase potassium-binding subunit.